The chain runs to 261 residues: tRNA (guanine-N(7)-)-methyltransferase (261 aa).

Positions 75, 100, 127, and 150 each coordinate S-adenosyl-L-methionine. The active site involves aspartate 150. Lysine 154 contributes to the substrate binding site. The tract at residues 156–161 (RHNKRR) is interaction with RNA. Residues aspartate 186 and 223 to 226 (THFE) each bind substrate.

This sequence belongs to the class I-like SAM-binding methyltransferase superfamily. TrmB family.

It carries out the reaction guanosine(46) in tRNA + S-adenosyl-L-methionine = N(7)-methylguanosine(46) in tRNA + S-adenosyl-L-homocysteine. It functions in the pathway tRNA modification; N(7)-methylguanine-tRNA biosynthesis. Functionally, catalyzes the formation of N(7)-methylguanine at position 46 (m7G46) in tRNA. The protein is tRNA (guanine-N(7)-)-methyltransferase of Xanthomonas campestris pv. campestris (strain 8004).